The primary structure comprises 704 residues: MATCSSSLLVLPNLRLSSNQRRNFKVRAQISGENKKATSLEPVNNNGSVSLSTTVQNQKGANEVNGKGKSKRKIVSDEIELLWDDGYGSKSVKDYFAAAKEILKADGGPPRWFSPVDCGRPVEDAPTLLFLPGMDGTGMGLVPHHKALGKAFHVSCLHIPVLDRTPFEGLLKVVEDVLRQEQATRPNKPIYLVGDSFGGCLALAVAARNRSLDLVLILVNPATSFDRSPLQPLLPILEMVPEELHFTVPYALSFIMGDPIKMATLGIDNQLPTGVKIEKLRQRLTKTMLPLLSELGGIIPRETLLWKLKLLRSGCAYANSRIHAVQAEVLVLASGKDMMLPSQEEAKRLHGLLKNCSVRCFKDNGHTLLLEDSISLLTVIKGTGKYRRSWRYDLVSDFLPPSKGELAYALDEVLGFLRNAVGSVFFSTMEDGKIVKGLAGVPDKGPVLLVGYHMLMGLELGPMSEAFIKEKNILFRGMAHPVLYSDNDPAKAFDYGDWIKVFGAYPVTATNLFKLLDSKSHVLLFPGGAREALHNRGEQYKLIWPEQQEFVRMAARFGATIVPFGTVGEDDIAELVLDYNDLMKIPILNDYITEVTRDTKQFKLREESEGEVANQPLYLPGLIPKVPGRFYYLFGKPIETKGRPELVKDKEEANQVYLEVKAEVENSIAYLLKKREEDPYRSVLDRLNYSLTHTTATHVPSFEP.

A chloroplast-targeting transit peptide spans 1 to 27 (MATCSSSLLVLPNLRLSSNQRRNFKVR).

It belongs to the diacylglycerol acyltransferase family. Interacts with PGM48. In terms of tissue distribution, mostly expressed in flowers (e.g. sepals, petals and stamen).

The protein localises to the plastid. It localises to the chloroplast. Its subcellular location is the plastoglobule. It catalyses the reaction a 1,2-diacyl-3-O-(beta-D-galactosyl)-sn-glycerol + a 1,2-diacylglycerol = an acyl-3-O-(beta-D-galactosyl)-sn-glycerol + a triacylglycerol. It carries out the reaction a 1,2-diacylglycerol + a fatty acyl-CoA = a triacylglycerol + CoA. The enzyme catalyses a fatty acyl-[ACP] + a 1,2-diacylglycerol = a triacylglycerol + holo-[ACP]. The catalysed reaction is phytol + a fatty acyl-CoA = a fatty acid phytyl ester + CoA. It catalyses the reaction phytol + tetradecanoyl-CoA = tetradecanoate phytyl ester + CoA. It carries out the reaction a 1,3-diacylglycerol + a fatty acyl-CoA = a triacylglycerol + CoA. The enzyme catalyses 1,2-dihexanoylglycerol + tetradecanoyl-CoA = 1,2-dihexanoyl-3-tetradecanoylglycerol + CoA. The catalysed reaction is 1,2-dihexanoylglycerol + hexadecanoyl-CoA = 1,2-dihexanoyl-3-hexadecanoylglycerol + CoA. It catalyses the reaction 1,2-dihexanoylglycerol + octadecanoyl-CoA = 1,2-dihexanoyl-3-octadecanoylglycerol + CoA. It carries out the reaction (7Z,10Z,13Z)-hexadecatrienoyl-CoA + 1,2-dihexanoylglycerol = 1,2-dihexanoyl-3-(7Z,10Z,13Z-hexadecatrienoyl)-glycerol + CoA. The enzyme catalyses 1,2-dihexanoylglycerol + (9Z)-octadecenoyl-CoA = 1,2-dihexanoyl-3-(9Z-octadecenoyl)-glycerol + CoA. The catalysed reaction is 1,2-dihexanoylglycerol + (9Z,12Z,15Z)-octadecatrienoyl-CoA = 1,2-dihexanoyl-3-(9Z,12Z,15Z-octadecatrienoyl)-glycerol + CoA. It catalyses the reaction phytol + decanoyl-CoA = decanoate phytyl ester + CoA. It carries out the reaction (7Z,10Z,13Z)-hexadecatrienoyl-CoA + phytol = (7Z,10Z,13Z)-hexadecatrienoate phytyl ester + CoA. The enzyme catalyses phytol + dodecanoyl-CoA = dodecanoate phytyl ester + CoA. Acyltransferase involved in fatty acid phytyl ester synthesis in chloroplasts, a process required for the maintenance of the photosynthetic membrane integrity during abiotic stress and senescence. Exhibits phytyl ester synthesis and diacylglycerol acyltransferase activities with broad substrate specificities, and can employ acyl-CoAs, acyl carrier proteins, and galactolipids as acyl donors. In Arabidopsis thaliana (Mouse-ear cress), this protein is Phytyl ester synthase 1, chloroplastic.